Here is a 705-residue protein sequence, read N- to C-terminus: UvrABC system protein C (705 aa).

The GIY-YIG domain maps to 16-95; it reads ETPGVYRFRD…IKQFDPRFNV (80 aa). Residues 208-243 form the UVR domain; sequence GRYLRRLEREMQQAAQAQEYERAARLRDDIGALRRA. Residues 315-332 show a composition bias toward low complexity; the sequence is AASTGTAGSTVPTTTAGS. Disordered stretches follow at residues 315–335 and 683–705; these read AAST…SQGE and RADA…ETVS.

It belongs to the UvrC family. In terms of assembly, interacts with UvrB in an incision complex.

The protein resides in the cytoplasm. In terms of biological role, the UvrABC repair system catalyzes the recognition and processing of DNA lesions. UvrC both incises the 5' and 3' sides of the lesion. The N-terminal half is responsible for the 3' incision and the C-terminal half is responsible for the 5' incision. This Frankia casuarinae (strain DSM 45818 / CECT 9043 / HFP020203 / CcI3) protein is UvrABC system protein C.